Consider the following 384-residue polypeptide: Odorant receptor 46a, isoform B (384 aa).

The Cytoplasmic portion of the chain corresponds to 1 to 37; it reads MVTEDFYKYQVWYFQILGVWQLPTWAADHQRRFQSMR. The chain crosses the membrane as a helical span at residues 38 to 58; the sequence is FGFILVILFIMLLLFSFEMLN. Residue Asn-59 is glycosylated (N-linked (GlcNAc...) asparagine). The Extracellular portion of the chain corresponds to 59–65; the sequence is NISQVRE. Residues 66 to 86 form a helical membrane-spanning segment; the sequence is ILKVFFMFATEISCMAKLLHL. Residues 87-130 lie on the Cytoplasmic side of the membrane; that stretch reads KLKSRKLAGLVDAMLSPEFGVKSEQEMQMLELDRVAVVRMRNSY. The chain crosses the membrane as a helical span at residues 131–151; that stretch reads GIMSLGAASLILIVPCFDNFG. Residues 152–165 are Extracellular-facing; that stretch reads ELPLAMLEVCSIEG. Residues 166–186 traverse the membrane as a helical segment; it reads WICYWSQYLFHSICLLPTCVL. Topologically, residues 187–247 are cytoplasmic; that stretch reads NITYDSVAYS…YNRIVRFKDL (61 aa). Residues 248-268 traverse the membrane as a helical segment; the sequence is VELFIKGPGSVQLMCSVLVLV. Residues 269–283 lie on the Extracellular side of the membrane; it reads SNLYDMSTMSIANGD. A helical membrane pass occupies residues 284-304; the sequence is AIFMLKTCIYQLVMLWQIFII. Residues 305-348 lie on the Cytoplasmic side of the membrane; sequence CYASNEVTVQSSRLCHSIYSSQWTGWNRANRRIVLLMMQRFNSP. A helical transmembrane segment spans residues 349–369; the sequence is MLLSTFNPTFAFSLEAFGSIV. Asn-370 is a glycosylation site (N-linked (GlcNAc...) asparagine). The Extracellular portion of the chain corresponds to 370 to 384; sequence NCSYSYFALLKRVNS.

This sequence belongs to the insect chemoreceptor superfamily. Heteromeric odorant receptor channel (TC 1.A.69) family. Or2a subfamily. Interacts with Orco. Complexes exist early in the endomembrane system in olfactory sensory neurons (OSNs), coupling these complexes to the conserved ciliary trafficking pathway. As to expression, isoform B is expressed in the antenna.

The protein resides in the cell membrane. Odorant receptor which mediates acceptance or avoidance behavior, depending on its substrates. The odorant receptor repertoire encodes a large collection of odor stimuli that vary widely in identity, intensity, and duration. May form a complex with Orco to form odorant-sensing units, providing sensitive and prolonged odorant signaling and calcium permeability. The chain is Odorant receptor 46a, isoform B (Or46a) from Drosophila melanogaster (Fruit fly).